Consider the following 73-residue polypeptide: Putative antitoxin VapB16 (73 aa).

It belongs to the UPF0330 family.

Its function is as follows. Possibly the antitoxin component of a type II toxin-antitoxin (TA) system. Its cognate toxin is VapC16 (Potential). The sequence is that of Putative antitoxin VapB16 (vapB16) from Archaeoglobus fulgidus (strain ATCC 49558 / DSM 4304 / JCM 9628 / NBRC 100126 / VC-16).